The primary structure comprises 133 residues: Probable mitochondrial pyruvate carrier 2 (133 aa).

A run of 3 helical transmembrane segments spans residues 39 to 55 (VTNL…IVPI), 73 to 91 (ASSL…TLIS), and 99 to 116 (MLAA…YNIY).

Belongs to the mitochondrial pyruvate carrier (MPC) (TC 2.A.105) family.

Its subcellular location is the mitochondrion inner membrane. In terms of biological role, may mediate the uptake of pyruvate into mitochondria. The protein is Probable mitochondrial pyruvate carrier 2 of Dictyostelium discoideum (Social amoeba).